Reading from the N-terminus, the 90-residue chain is Acylphosphatase (90 aa).

In terms of domain architecture, Acylphosphatase-like spans 4-90; sequence RWRFLIEGSV…TGNDWFDVRT (87 aa). Active-site residues include arginine 19 and asparagine 37.

This sequence belongs to the acylphosphatase family.

It catalyses the reaction an acyl phosphate + H2O = a carboxylate + phosphate + H(+). In Synechococcus sp. (strain CC9311), this protein is Acylphosphatase (acyP).